The chain runs to 145 residues: Large ribosomal subunit protein uL16 (145 aa).

Belongs to the universal ribosomal protein uL16 family. Part of the 50S ribosomal subunit.

In terms of biological role, binds 23S rRNA and is also seen to make contacts with the A and possibly P site tRNAs. This is Large ribosomal subunit protein uL16 from Agathobacter rectalis (strain ATCC 33656 / DSM 3377 / JCM 17463 / KCTC 5835 / VPI 0990) (Eubacterium rectale).